Consider the following 150-residue polypeptide: Large ribosomal subunit protein uL15 (150 aa).

Positions 1-49 (MELHQLKSVSKSRNHKSKVVGRGHGSGLGKTSSRGQKGQKARKSGLTRL) are disordered. A compositionally biased stretch (basic residues) spans 10 to 21 (SKSRNHKSKVVG).

This sequence belongs to the universal ribosomal protein uL15 family. Part of the 50S ribosomal subunit.

Functionally, binds to the 23S rRNA. The polypeptide is Large ribosomal subunit protein uL15 (Mycoplasma genitalium (strain ATCC 33530 / DSM 19775 / NCTC 10195 / G37) (Mycoplasmoides genitalium)).